We begin with the raw amino-acid sequence, 249 residues long: Adenylate kinase (249 aa).

ATP is bound at residue 43-48 (GAGKGT). Residues 63–92 (ATGDMLRAQVAAKTALGVEAKKIMDQGGLV) are NMP. Residues threonine 64, arginine 69, 90–92 (GLV), 119–122 (GFPR), and glutamine 126 each bind AMP. The LID stretch occupies residues 160–197 (GRLVHPASGRSYHKLFNPPKKNMIDDITGEPLVQRSDD). ATP-binding positions include arginine 161 and 170–171 (SY). AMP contacts are provided by arginine 194 and arginine 205. Glutamine 233 contributes to the ATP binding site.

It belongs to the adenylate kinase family. AK2 subfamily. Monomer.

It is found in the cytoplasm. The protein resides in the cytosol. It localises to the mitochondrion intermembrane space. It carries out the reaction AMP + ATP = 2 ADP. Functionally, catalyzes the reversible transfer of the terminal phosphate group between ATP and AMP. Plays an important role in cellular energy homeostasis and in adenine nucleotide metabolism. Adenylate kinase activity is critical for regulation of the phosphate utilization and the AMP de novo biosynthesis pathways. The protein is Adenylate kinase of Scheffersomyces stipitis (strain ATCC 58785 / CBS 6054 / NBRC 10063 / NRRL Y-11545) (Yeast).